A 204-amino-acid chain; its full sequence is MAAANPWDPASAPNGAGLVLGHFIASGMVNQKNLEIELLKLEKDTADVVHPFFLAQKCHTLQSMNNHLEAVLKEKRSLRQRLLKPMCQENLPIEAVYHRYMVHLLELAVTFIERLETHLETIRNIPHLAANLKKMNQALAKMDILVTETEELAENILKWRKQQNEVSSCIPKILAEESYLYKHDIIMPPLPFTSKVHVQTINAK.

Positions 54-84 (LAQKCHTLQSMNNHLEAVLKEKRSLRQRLLK) form a coiled coil.

This sequence belongs to the HAUS2 family. Component of the HAUS augmin-like complex. The complex interacts with the gamma-tubulin ring complex and this interaction is required for spindle assembly. Interacts with EML3 (phosphorylated form).

The protein localises to the cytoplasm. Its subcellular location is the cytoskeleton. It is found in the microtubule organizing center. It localises to the centrosome. The protein resides in the spindle. The sequence is that of HAUS augmin-like complex subunit 2 (HAUS2) from Pongo abelii (Sumatran orangutan).